The following is a 483-amino-acid chain: Peroxisomal biogenesis factor 3 (483 aa).

Over 1–14 (MTGNRSLVQRHRKK) the chain is Peroxisomal. A helical membrane pass occupies residues 15–35 (FVVSSVLFATLFATCAITVYF). The Cytoplasmic segment spans residues 36–483 (SKRWLYKQHL…SACVYSNFGL (448 aa)). Disordered regions lie at residues 119 to 149 (GLSS…VSET) and 230 to 253 (NNLP…TRSI). The segment covering 242–253 (SDGTIDTDTRSI) has biased composition (polar residues).

It belongs to the peroxin-3 family.

It is found in the peroxisome membrane. Its function is as follows. Involved in peroxisome biosynthesis. This is Peroxisomal biogenesis factor 3 (PEX3) from Kluyveromyces lactis (strain ATCC 8585 / CBS 2359 / DSM 70799 / NBRC 1267 / NRRL Y-1140 / WM37) (Yeast).